Reading from the N-terminus, the 143-residue chain is Flagellar assembly factor FliW (143 aa).

The protein belongs to the FliW family. In terms of assembly, interacts with translational regulator CsrA and flagellin(s).

It localises to the cytoplasm. Acts as an anti-CsrA protein, binds CsrA and prevents it from repressing translation of its target genes, one of which is flagellin. Binds to flagellin and participates in the assembly of the flagellum. This Bacillus velezensis (strain DSM 23117 / BGSC 10A6 / LMG 26770 / FZB42) (Bacillus amyloliquefaciens subsp. plantarum) protein is Flagellar assembly factor FliW.